Consider the following 102-residue polypeptide: Complement inhibitor RaCI6 (102 aa).

Positions 1 to 24 (MAALNGLVLLLLTISAMFISECYS) are cleaved as a signal peptide. 2 cysteine pairs are disulfide-bonded: C37-C61 and C42-C63.

Belongs to the RaCI family. As to expression, expressed in salivary glands.

Its subcellular location is the secreted. Complement inhibitor. Prevents complement-mediated C5 activation by binding to C5. Binds C5 at a different binding site than the other tick complement inhibitors OmCI and CirpT1, and the drug eculizumab. The polypeptide is Complement inhibitor RaCI6 (Dermacentor andersoni (Rocky mountain wood tick)).